We begin with the raw amino-acid sequence, 162 residues long: Peptide methionine sulfoxide reductase MsrA (162 aa).

Cys-16 is a catalytic residue.

This sequence belongs to the MsrA Met sulfoxide reductase family.

The catalysed reaction is L-methionyl-[protein] + [thioredoxin]-disulfide + H2O = L-methionyl-(S)-S-oxide-[protein] + [thioredoxin]-dithiol. It carries out the reaction [thioredoxin]-disulfide + L-methionine + H2O = L-methionine (S)-S-oxide + [thioredoxin]-dithiol. Functionally, has an important function as a repair enzyme for proteins that have been inactivated by oxidation. Catalyzes the reversible oxidation-reduction of methionine sulfoxide in proteins to methionine. This chain is Peptide methionine sulfoxide reductase MsrA, found in Geobacter metallireducens (strain ATCC 53774 / DSM 7210 / GS-15).